The primary structure comprises 152 residues: MNNNNNFNSNFNSNRISSTQPYLSDDARNALFEGKDRKWGNNNNNNYDTLSNQDVFEKQKRDMEEQDKMLDALSGSISRVKDTAITINKTAQEQTDMLDELDVHVDSTSARMRNTTKNLITLTQQSKTTGYCSAICFLLLVLLVIIILASVL.

Low complexity predominate over residues Met-1–Asn-14. The interval Met-1–Tyr-22 is disordered. Residues Met-1–Tyr-131 are Cytoplasmic-facing. A t-SNARE coiled-coil homology domain is found at Lys-60–Leu-122. The chain crosses the membrane as a helical; Anchor for type IV membrane protein span at residues Cys-132–Leu-152.

Belongs to the syntaxin family. Component of the SNARE complex composed of syn7A, syn8A, vamp7A and vti1A.

The protein localises to the endosome membrane. Involved in the targeting and/or fusion of transport vesicles to their target membrane during transport of proteins from the early endosome to the lysosome. Required for fusion of late endosomes with lysosomes and homotypic lysosomal fusion. The polypeptide is Syntaxin-8A (Dictyostelium discoideum (Social amoeba)).